A 355-amino-acid polypeptide reads, in one-letter code: GTPase Obg (355 aa).

Positions 1 to 159 (MKFLDEAKVY…KTIWLRLKLI (159 aa)) constitute an Obg domain. In terms of domain architecture, OBG-type G spans 160 to 327 (ADAGLVGLPN…ALRALRDIIV (168 aa)). Residues 166–173 (GLPNAGKS), 191–195 (FTTLH), 212–215 (DIPG), 279–282 (SQID), and 308–310 (SAA) contribute to the GTP site. Residues serine 173 and threonine 193 each contribute to the Mg(2+) site. The tract at residues 333 to 355 (GDTALPDRSMPHESEVEEEDDRL) is disordered.

This sequence belongs to the TRAFAC class OBG-HflX-like GTPase superfamily. OBG GTPase family. As to quaternary structure, monomer. It depends on Mg(2+) as a cofactor.

The protein resides in the cytoplasm. In terms of biological role, an essential GTPase which binds GTP, GDP and possibly (p)ppGpp with moderate affinity, with high nucleotide exchange rates and a fairly low GTP hydrolysis rate. Plays a role in control of the cell cycle, stress response, ribosome biogenesis and in those bacteria that undergo differentiation, in morphogenesis control. In Agrobacterium fabrum (strain C58 / ATCC 33970) (Agrobacterium tumefaciens (strain C58)), this protein is GTPase Obg.